The following is a 442-amino-acid chain: Histidine--tRNA ligase (442 aa).

It belongs to the class-II aminoacyl-tRNA synthetase family. Homodimer.

The protein localises to the cytoplasm. It catalyses the reaction tRNA(His) + L-histidine + ATP = L-histidyl-tRNA(His) + AMP + diphosphate + H(+). This Treponema pallidum (strain Nichols) protein is Histidine--tRNA ligase (hisS).